Reading from the N-terminus, the 147-residue chain is Hemoglobin subunit epsilon (147 aa).

Residues 3–147 (HFTAEEKSVI…VATALAHKYH (145 aa)) enclose the Globin domain. S51 bears the Phosphoserine mark. 2 residues coordinate heme b: H64 and H93.

The protein belongs to the globin family. Red blood cells.

In terms of biological role, hemoglobin epsilon chain is a beta-type chain found in early embryos. The chain is Hemoglobin subunit epsilon (HBE1) from Sus scrofa (Pig).